The primary structure comprises 454 residues: Peroxisome assembly protein 10 (454 aa).

Residues 1-23 lie on the Peroxisomal matrix side of the membrane; sequence MATQPPPARPPPPLTSSPYPYAA. A helical transmembrane segment spans residues 24-53; the sequence is APDIIRAHQKDAYFQGVLANRLSDLHRRLR. Position 54 (Gly-54) is a topological domain, cytoplasmic. Residues 55–76 form a helical membrane-spanning segment; that stretch reads ARSAHAWAAETRTFAAALYLCL. Topologically, residues 77 to 132 are peroxisomal matrix; it reads TTLLGNRTLGEEYCDLVQVEEAPSKLFASSSSKAADDHIYENGLGGGGDGGPLLPS. The helical transmembrane segment at 133–165 threads the bilayer; it reads LPRRAGYILTAIVLPHLASRALPSVRSAIRKRL. Topologically, residues 166–201 are cytoplasmic; it reads QSRLATLSRRRQQTGTKSGSGRGGRGGGGGITEYRV. The tract at residues 171–194 is disordered; the sequence is TLSRRRQQTGTKSGSGRGGRGGGG. Over residues 183–194 the composition is skewed to gly residues; sequence SGSGRGGRGGGG. The helical transmembrane segment at 202 to 229 threads the bilayer; that stretch reads LRYLLTHLTPLTSGAHFRAATLAVFYFT. Topologically, residues 230 to 276 are peroxisomal matrix; the sequence is GAYYELSKWVWGLRYVFTTRAGRVVDDDHNRHHHSPQHGGGNGGRAG. The helical transmembrane segment at 277–296 threads the bilayer; the sequence is YEVLGVLLVVQMAVRAWLHV. The Cytoplasmic portion of the chain corresponds to 297 to 454; the sequence is REQLSSGSVA…VQHILPLRAA (158 aa). Positions 302–329 are disordered; it reads SGSVAGGGGEEEEDGEDGFRERTAFGPG. Positions 402, 405, 417, 419, 422, 425, 436, and 439 each coordinate Zn(2+). Residues 402–440 form an RING-type zinc finger; that stretch reads CTLCLEELKDPAATQCGHVFCWACIGDWVREKPECPLCR.

Belongs to the pex2/pex10/pex12 family. In terms of assembly, component of the PEX2-PEX10-PEX12 retrotranslocation channel, composed of PEX2, PEX10 and PEX12.

It is found in the peroxisome membrane. The enzyme catalyses S-ubiquitinyl-[E2 ubiquitin-conjugating enzyme]-L-cysteine + [acceptor protein]-L-lysine = [E2 ubiquitin-conjugating enzyme]-L-cysteine + N(6)-ubiquitinyl-[acceptor protein]-L-lysine.. It functions in the pathway protein modification; protein ubiquitination. Its activity is regulated as follows. The E3 ubiquitin-protein ligase activity is stimulated by PEX12. E3 ubiquitin-protein ligase component of a retrotranslocation channel required for peroxisome organization by mediating export of the PEX5 receptor from peroxisomes to the cytosol, thereby promoting PEX5 recycling. The retrotranslocation channel is composed of PEX2, PEX10 and PEX12; each subunit contributing transmembrane segments that coassemble into an open channel that specifically allows the passage of PEX5 through the peroxisomal membrane. PEX10 also regulates PEX5 recycling by acting as a E3 ubiquitin-protein ligase. When PEX5 recycling is compromised, PEX10 catalyzes polyubiquitination of PEX5 during its passage through the retrotranslocation channel, leading to its degradation. This is Peroxisome assembly protein 10 from Thermothelomyces thermophilus (strain ATCC 42464 / BCRC 31852 / DSM 1799) (Sporotrichum thermophile).